A 267-amino-acid chain; its full sequence is MLKAIVTNDDGVHSRSLRALAESLASRGWDVVVAAPLGNWSGYSKSIGRFRGNRVYRFESRGVRFFTGDMPPAALVGTAIDIAGFEPDIVVSGINYGPNLGIYDFFSSGTIGGALEAALRGFKSVSISSACREEETDCLPEALSISLAVVETSVETLSSSAGLMVVNIPRSPRGFKVTRPCRRVPRFSGEIGEEGSLLVEKFDHSRLFSSEHDSCDGRLFSMGYIPVSLYKIDNGWIHPLDPSRDGYLKAVEDILNYKIFPSAGKQF.

A divalent metal cation contacts are provided by Asp-9, Asp-10, Ser-41, and Asn-95.

The protein belongs to the SurE nucleotidase family. The cofactor is a divalent metal cation.

It is found in the cytoplasm. It catalyses the reaction a ribonucleoside 5'-phosphate + H2O = a ribonucleoside + phosphate. In terms of biological role, nucleotidase that shows phosphatase activity on nucleoside 5'-monophosphates. The protein is 5'-nucleotidase SurE of Aeropyrum pernix (strain ATCC 700893 / DSM 11879 / JCM 9820 / NBRC 100138 / K1).